Here is a 118-residue protein sequence, read N- to C-terminus: MSGGSSCSQTPSRAIPTTRRVVLADGVQLPPGDYSTTPGGTLFSTTPGGTRIIYDRKFLMECRNSPVTKTPPRDLPTIPGVTSPTGDEPPTEARQNHLRSSPEDKPAGGEESQFEMDI.

Position 2 is an N-acetylserine (S2). The interval 27–48 (VQLPPGDYSTTPGGTLFSTTPG) is disordered. The segment covering 34 to 48 (YSTTPGGTLFSTTPG) has biased composition (polar residues). T37 carries the phosphothreonine; by MTOR modification. At T41 the chain carries Phosphothreonine. S44 is subject to Phosphoserine. Position 46 is a phosphothreonine; by MTOR (T46). T50 carries the phosphothreonine modification. Y54 bears the Phosphotyrosine mark. The YXXXXLphi motif signature appears at 54 to 60 (YDRKFLM). K57 participates in a covalent cross-link: Glycyl lysine isopeptide (Lys-Gly) (interchain with G-Cter in ubiquitin). Positions 64 to 118 (NSPVTKTPPRDLPTIPGVTSPTGDEPPTEARQNHLRSSPEDKPAGGEESQFEMDI) are disordered. Phosphoserine; by DYRK2, MAPK1, MAPK3 and MTOR is present on S65. T70 is modified (phosphothreonine; by MTOR). A Phosphothreonine modification is found at T77. A phosphoserine mark is found at S83 and S100. The residue at position 101 (S101) is a Phosphoserine; by DYRK2. A Phosphoserine modification is found at S112. The TOS motif motif lies at 114–118 (FEMDI).

This sequence belongs to the eIF4E-binding protein family. In terms of assembly, hypophosphorylated EIF4EBP1 competes with EIF4G1/EIF4G3 to interact with EIF4E; insulin stimulated MAP-kinase (MAPK1 and MAPK3) or mTORC1 phosphorylation of EIF4EBP1 causes dissociation of the complex allowing EIF4G1/EIF4G3 to bind and consequent initiation of translation. Interacts (via TOS motif) with RPTOR; promoting phosphorylation by mTORC1. In terms of processing, phosphorylated on serine and threonine residues in response to insulin, EGF and PDGF. Phosphorylation at Thr-37, Thr-46, Ser-65 and Thr-70, corresponding to the hyperphosphorylated form, is regulated by mTORC1 and abolishes binding to EIF4E. Post-translationally, ubiquitinated: when eIF4E levels are low, hypophosphorylated form is ubiquitinated by the BCR(KLHL25) complex, leading to its degradation and serving as a homeostatic mechanism to maintain translation and prevent eIF4E inhibition when eIF4E levels are low. Not ubiquitinated when hyperphosphorylated (at Thr-37, Thr-46, Ser-65 and Thr-70) or associated with eIF4E.

The protein resides in the cytoplasm. Its subcellular location is the nucleus. Its function is as follows. Repressor of translation initiation that regulates EIF4E activity by preventing its assembly into the eIF4F complex: hypophosphorylated form competes with EIF4G1/EIF4G3 and strongly binds to EIF4E, leading to repress translation. In contrast, hyperphosphorylated form dissociates from EIF4E, allowing interaction between EIF4G1/EIF4G3 and EIF4E, leading to initiation of translation. Mediates the regulation of protein translation by hormones, growth factors and other stimuli that signal through the MAP kinase and mTORC1 pathways. The polypeptide is Eukaryotic translation initiation factor 4E-binding protein 1 (EIF4EBP1) (Bos taurus (Bovine)).